The following is a 557-amino-acid chain: Aerobic glycerol-3-phosphate dehydrogenase (557 aa).

21-49 (DLVIIGGGITGAGIALDASERGMKVALVE) lines the FAD pocket.

This sequence belongs to the FAD-dependent glycerol-3-phosphate dehydrogenase family. FAD is required as a cofactor.

It is found in the cytoplasm. It carries out the reaction a quinone + sn-glycerol 3-phosphate = dihydroxyacetone phosphate + a quinol. It functions in the pathway polyol metabolism; glycerol degradation via glycerol kinase pathway; glycerone phosphate from sn-glycerol 3-phosphate (aerobic route): step 1/1. The sequence is that of Aerobic glycerol-3-phosphate dehydrogenase (glpD) from Staphylococcus aureus (strain USA300).